Reading from the N-terminus, the 418-residue chain is Serine--tRNA ligase (418 aa).

Residue 231-233 participates in L-serine binding; it reads TAE. Residue 262-264 coordinates ATP; the sequence is RSE. E285 provides a ligand contact to L-serine. Residue 349-352 participates in ATP binding; the sequence is EISS. S385 is a binding site for L-serine.

It belongs to the class-II aminoacyl-tRNA synthetase family. Type-1 seryl-tRNA synthetase subfamily. As to quaternary structure, homodimer. The tRNA molecule binds across the dimer.

It is found in the cytoplasm. It catalyses the reaction tRNA(Ser) + L-serine + ATP = L-seryl-tRNA(Ser) + AMP + diphosphate + H(+). The enzyme catalyses tRNA(Sec) + L-serine + ATP = L-seryl-tRNA(Sec) + AMP + diphosphate + H(+). Its pathway is aminoacyl-tRNA biosynthesis; selenocysteinyl-tRNA(Sec) biosynthesis; L-seryl-tRNA(Sec) from L-serine and tRNA(Sec): step 1/1. Its function is as follows. Catalyzes the attachment of serine to tRNA(Ser). Is also able to aminoacylate tRNA(Sec) with serine, to form the misacylated tRNA L-seryl-tRNA(Sec), which will be further converted into selenocysteinyl-tRNA(Sec). The polypeptide is Serine--tRNA ligase (Ureaplasma parvum serovar 3 (strain ATCC 27815 / 27 / NCTC 11736)).